The sequence spans 248 residues: Probable transcriptional regulatory protein RHECIAT_CH0003714 (248 aa).

It belongs to the TACO1 family.

The protein localises to the cytoplasm. This Rhizobium etli (strain CIAT 652) protein is Probable transcriptional regulatory protein RHECIAT_CH0003714.